A 516-amino-acid polypeptide reads, in one-letter code: Tyrosine decarboxylase 3 (516 aa).

At K319 the chain carries N6-(pyridoxal phosphate)lysine.

It belongs to the group II decarboxylase family. Homodimer. Pyridoxal 5'-phosphate is required as a cofactor.

It carries out the reaction L-tyrosine + H(+) = tyramine + CO2. This chain is Tyrosine decarboxylase 3 (TYRDC-3), found in Petroselinum crispum (Parsley).